Here is a 238-residue protein sequence, read N- to C-terminus: Cysteine-rich venom protein (238 aa).

An N-terminal signal peptide occupies residues 1 to 19 (MIAFIVLLSLAAVLQQSSG). Residues 38-164 (VDKHNALRRS…STKYLYVCQY (127 aa)) enclose the SCP domain. Cystine bridges form between cysteine 75/cysteine 153, cysteine 92/cysteine 165, cysteine 148/cysteine 162, cysteine 184/cysteine 191, cysteine 187/cysteine 196, cysteine 200/cysteine 233, cysteine 209/cysteine 227, and cysteine 218/cysteine 231. A ShKT domain is found at 200–233 (CKYEDAFTNCKALAKKTKCKTEWIKSKCPATCFC).

It belongs to the CRISP family. Expressed by the venom gland.

It localises to the secreted. Functionally, blocks contraction of smooth muscle elicited by high potassium-induced depolarization, but does not block caffeine-stimulated contraction. May target voltage-gated calcium channels on smooth muscle. This chain is Cysteine-rich venom protein, found in Austrelaps superbus (Lowland copperhead snake).